Here is a 1011-residue protein sequence, read N- to C-terminus: Multiple C2 domain and transmembrane region protein 7 (1011 aa).

The region spanning 1–110 is the C2 1 domain; sequence MMMSNLKLGV…PHSDAVVLHF (110 aa). The segment covering 178–195 has biased composition (polar residues); it reads QEHQHQHPQGPNQSSSLA. Positions 178–201 are disordered; it reads QEHQHQHPQGPNQSSSLAAEQDNH. 3 consecutive C2 domains span residues 261 to 381, 421 to 546, and 587 to 709; these read IHKD…PQWY, VDCS…ARWY, and YSSD…THSY. Positions 294, 300, 347, 349, and 354 each coordinate Ca(2+). 3 consecutive transmembrane segments (helical) span residues 812–832, 846–866, and 954–974; these read MMTV…ICSW, LMLV…MFLI, and IFVI…IQIV.

This sequence belongs to the MCTP family. Requires Ca(2+) as cofactor. Accumulates specifically in hydathodes. Restricted the basal meristem of roots. Observed in flowers.

It is found in the membrane. The protein resides in the vesicle. The protein localises to the endosome membrane. Its function is as follows. May function as a signaling molecule by regulating the trafficking of other regulators. The polypeptide is Multiple C2 domain and transmembrane region protein 7 (Arabidopsis thaliana (Mouse-ear cress)).